Consider the following 428-residue polypeptide: Histidine--tRNA ligase (428 aa).

This sequence belongs to the class-II aminoacyl-tRNA synthetase family. Homodimer.

The protein localises to the cytoplasm. The enzyme catalyses tRNA(His) + L-histidine + ATP = L-histidyl-tRNA(His) + AMP + diphosphate + H(+). The protein is Histidine--tRNA ligase of Staphylococcus carnosus (strain TM300).